The chain runs to 260 residues: Hemin import ATP-binding protein HmuV (260 aa).

Residues 2 to 239 (IRAENITLIR…ETIARVYGIG (238 aa)) form the ABC transporter domain. Residue 34–41 (GPNGAGKS) participates in ATP binding.

It belongs to the ABC transporter superfamily. Heme (hemin) importer (TC 3.A.1.14.5) family. In terms of assembly, the complex is composed of two ATP-binding proteins (HmuV), two transmembrane proteins (HmuU) and a solute-binding protein (HmuT).

Its subcellular location is the cell inner membrane. Part of the ABC transporter complex HmuTUV involved in hemin import. Responsible for energy coupling to the transport system. This Agrobacterium fabrum (strain C58 / ATCC 33970) (Agrobacterium tumefaciens (strain C58)) protein is Hemin import ATP-binding protein HmuV.